A 1951-amino-acid polypeptide reads, in one-letter code: Sodium channel protein type 3 subunit alpha (1951 aa).

The Cytoplasmic segment spans residues 1-128 (MAQALLVPPG…KIAIKILVHS (128 aa)). The tract at residues 28-60 (RAAEEKAKKPKKEQDIDDENKPKPNSDLEAGKN) is disordered. The segment covering 46 to 57 (ENKPKPNSDLEA) has biased composition (basic and acidic residues). Residues 110 to 455 (ILTPLNPVRK…QQMLEQLKKQ (346 aa)) form an I repeat. Residues 129 to 146 (LFSMLIMCTILTNCVFMT) form a helical membrane-spanning segment. The Extracellular portion of the chain corresponds to 147 to 152 (LSNPPD). The chain crosses the membrane as a helical span at residues 153 to 174 (WTKNVEYTFTGIYTFESLIKIL). Residues 175–188 (ARGFCLEDFTFLRD) are Cytoplasmic-facing. A helical membrane pass occupies residues 189–206 (PWNWLDFSVIVMAYVTEF). Residues 207-213 (VDLGNVS) lie on the Extracellular side of the membrane. Residue Asn-211 is glycosylated (N-linked (GlcNAc...) asparagine). Residues 214 to 235 (ALRTFRVLRALKTISVIPGLKT) form a helical membrane-spanning segment. Topologically, residues 236–249 (IVGALIQSVKKLSD) are cytoplasmic. The helical transmembrane segment at 250–269 (VMILTVFCLSVFALIGLQLF) threads the bilayer. Residues 270–369 (MGNLRNKCSQ…NYGYTSFDTF (100 aa)) lie on the Extracellular side of the membrane. Asn-290, Asn-296, Asn-302, Asn-307, and Asn-339 each carry an N-linked (GlcNAc...) asparagine glycan. The segment at residues 370–386 (SWAFLSLFRLMTQDYWE) is an intramembrane region (pore-forming). The Extracellular portion of the chain corresponds to 387–397 (NLYQLTLRAAG). The helical transmembrane segment at 398-424 (KTYMIFFVLVIFLGSFYLVNLILAVVA) threads the bilayer. Topologically, residues 425–712 (MAYEEQNQAT…LVNLIVMDPF (288 aa)) are cytoplasmic. A phosphoserine mark is found at Ser-484, Ser-485, and Ser-486. 2 disordered regions span residues 493–529 (SKSAKEWRNRRKKRRQREHLEGNHRADGDRFPKSESE) and 587–633 (VGSE…TEVR). Positions 500–509 (RNRRKKRRQR) are enriched in basic residues. 2 stretches are compositionally biased toward basic and acidic residues: residues 510–529 (EHLEGNHRADGDRFPKSESE) and 596–622 (DEHSTFEDSESRRDSLFVPHRPGERRN). The stretch at 693-965 (CCDAWLKVKH…QIAVGRMQKG (273 aa)) is one II repeat. The helical transmembrane segment at 713–730 (VDLAITICIVLNTLFMAM) threads the bilayer. Over 731–738 (EHYPMTQQ) the chain is Extracellular. The helical transmembrane segment at 739 to 763 (FSSVLTVGNLVFTGIFTAEMVLKII) threads the bilayer. Topologically, residues 764-773 (AMDPYYYFQE) are cytoplasmic. The helical transmembrane segment at 774 to 793 (GWNIFDGIIVSLSLMELGLA) threads the bilayer. Residues 794–797 (NVEG) are Extracellular-facing. Residues 798-816 (LSVLRSFRLLRVFKLAKSW) form a helical membrane-spanning segment. At 817–834 (PTLNMLIKIIGNSVGALG) the chain is on the cytoplasmic side. Residues 835 to 855 (NLTLVLAIIVFIFAVVGMQLF) traverse the membrane as a helical segment. The Extracellular portion of the chain corresponds to 856–880 (GKSYKECVCKINVDCKLPRWHMNDF). Cys-864 and Cys-870 are joined by a disulfide. Residues 881 to 896 (FHSFLIVFRVLCGEWI) constitute an intramembrane region (pore-forming). Residues 897-907 (ETMWDCMEVAG) lie on the Extracellular side of the membrane. Cys-902 and Cys-911 are joined by a disulfide. Residues 908-934 (QTMCLIVFMLVMVIGNLVVLNLFLALL) form a helical membrane-spanning segment. Over 935–1156 (LSSFSSDNLA…RKTCYSIVEH (222 aa)) the chain is Cytoplasmic. The segment at 1068–1112 (TEEFSSESELEESKEKLNATSSSEGSTVDVAPPREGEQAEIEPEE) is disordered. One copy of the III repeat lies at 1139 to 1450 (KGKIWWNLRK…KKYYNAMKKL (312 aa)). Residues 1157–1177 (NWFETFIVFMILLSSGALAFE) traverse the membrane as a helical segment. Over 1178-1189 (DIYIEQRKTIKT) the chain is Extracellular. The chain crosses the membrane as a helical span at residues 1190–1211 (MLEYADKVFTYIFILEMLLKWV). Residues 1212–1217 (AYGFQT) lie on the Cytoplasmic side of the membrane. The chain crosses the membrane as a helical span at residues 1218–1243 (YFTNAWCWLDFLIVDVSLVSLVANAL). Topologically, residues 1244–1252 (GYSELGAIK) are extracellular. Residues 1253–1271 (SLRTLRALRPLRALSRFEG) traverse the membrane as a helical segment. Residues 1272-1284 (MRVVVNALVGAIP) are Cytoplasmic-facing. Residues 1285 to 1307 (SIMNVLLVCLIFWLIFSIMGVNL) form a helical membrane-spanning segment. Over 1308-1353 (FAGKFYHCVNTTTGNMFEIKEVNNFSDCQALGKQARWKNVKVNFDN) the chain is Extracellular. Cys-1315 and Cys-1335 are disulfide-bonded. Asn-1317 and Asn-1331 each carry an N-linked (GlcNAc...) asparagine glycan. Residues 1354–1370 (VGAGYLALLQVATFKGW) constitute an intramembrane region (pore-forming). Residues 1371 to 1393 (MDIMYAAVDSRDVKLQPIYEENL) lie on the Extracellular side of the membrane. The chain crosses the membrane as a helical span at residues 1394–1419 (YMYLYFVIFIIFGSFFTLNLFIGVII). The Cytoplasmic segment spans residues 1420–1477 (DNFNQQKKKFGGQDIFMTEEQKKYYNAMKKLGSKKPQKPIPRPANKFQGMVFDFVTRQ). Ser-1452 is modified (phosphoserine; by PKC). An IV repeat occupies 1459 to 1757 (IPRPANKFQG…WEKFDPDATQ (299 aa)). Residues 1478 to 1496 (VFDISIMILICLNMVTMMV) traverse the membrane as a helical segment. Residues 1497–1504 (ETDDQSKY) lie on the Extracellular side of the membrane. Residues 1505–1528 (MTLVLSRINLVFIVLFTGEFLLKL) traverse the membrane as a helical segment. The Cytoplasmic portion of the chain corresponds to 1529–1538 (ISLRYYYFTI). Residues 1539–1556 (GWNIFDFVVVILSIVGMF) traverse the membrane as a helical segment. Residues 1557-1568 (LAELIEKYFVSP) are Extracellular-facing. A helical transmembrane segment spans residues 1569–1591 (TLFRVIRLARIGRILRLIKGAKG). Residues 1592-1604 (IRTLLFALMMSLP) lie on the Cytoplasmic side of the membrane. Residues 1605-1628 (ALFNIGLLLFLVMFIYAIFGMSNF) form a helical membrane-spanning segment. Residues 1629–1650 (AYVKKEAGIDDMFNFETFGNSM) are Extracellular-facing. The segment at residues 1651-1663 (ICLFQITTSAGWD) is an intramembrane region (pore-forming). Residues 1664–1695 (GLLAPILNSAPPDCDPDAIHPGSSVKGDCGNP) are Extracellular-facing. The chain crosses the membrane as a helical span at residues 1696 to 1721 (SVGIFFFVSYIIISFLVVVNMYIAVI). At 1722–1951 (LENFSVATEE…KGKEVRENQK (230 aa)) the chain is on the cytoplasmic side. An IQ domain is found at 1851–1880 (EEVSAAIIQRNYRCYLLKQRLKNISSKYDK). Positions 1898–1951 (DKLNGNSTPEKTDGSSSTTSPPSYDSVTKPDKEKFEKDKPEKEIKGKEVRENQK) are disordered. Residues 1925 to 1951 (TKPDKEKFEKDKPEKEIKGKEVRENQK) show a composition bias toward basic and acidic residues.

Belongs to the sodium channel (TC 1.A.1.10) family. Nav1.3/SCN3A subfamily. Heterooligomer of an alpha subunit, SCN3A, and 1 to 3 regulatory beta subunits including SCN1B and SCN2B; disulfide-linked with some beta subunits like SCN2B. Interacts with NEDD4L; could regulate expression of SCN3A at the plasma membrane through ubiquitination-regulated endocytosis. Interacts with the conotoxin GVIIJ. Interacts with the spider beta/delta-theraphotoxin-Pre1a. Interacts with the spider RTX-VII toxin (AC P0DL75). In terms of processing, may be ubiquitinated by NEDD4L; which would promote its endocytosis. Post-translationally, phosphorylation at Ser-1452 by PKC in a highly conserved cytoplasmic loop slows inactivation of the sodium channel and reduces peak sodium currents.

The protein localises to the cell membrane. Its subcellular location is the basal cell membrane. It catalyses the reaction Na(+)(in) = Na(+)(out). In terms of biological role, pore-forming subunit of Nav1.3, a voltage-gated sodium (Nav) channel that directly mediates the depolarizing phase of action potentials in excitable membranes. Navs, also called VGSCs (voltage-gated sodium channels) or VDSCs (voltage-dependent sodium channels), operate by switching between closed and open conformations depending on the voltage difference across the membrane. In the open conformation they allow Na(+) ions to selectively pass through the pore, along their electrochemical gradient. The influx of Na+ ions provokes membrane depolarization, initiating the propagation of electrical signals throughout cells and tissues. In some secretory cell types, it also participates in cell excitability through membrane depolarization and regulates cells responsiveness to stimuli triggering secretion. For instance, it controls the release of serotonin/5-hydroxytryptamine by enterochromaffin cells and is required for both glucagon- and glucose-induced insulin secretion in pancreatic endocrine cells. The protein is Sodium channel protein type 3 subunit alpha of Rattus norvegicus (Rat).